We begin with the raw amino-acid sequence, 412 residues long: Argininosuccinate synthase (412 aa).

Residues 12–20 and Ala-39 each bind ATP; that span reads AYSGGLDTS. The L-citrulline site is built by Tyr-91 and Ser-96. Gly-121 contributes to the ATP binding site. The L-aspartate site is built by Thr-123, Asn-127, and Asp-128. Asn-127 lines the L-citrulline pocket. L-citrulline is bound by residues Arg-131, Ser-180, Ser-189, Glu-265, and Tyr-277.

Belongs to the argininosuccinate synthase family. Type 1 subfamily. In terms of assembly, homotetramer.

It is found in the cytoplasm. The enzyme catalyses L-citrulline + L-aspartate + ATP = 2-(N(omega)-L-arginino)succinate + AMP + diphosphate + H(+). The protein operates within amino-acid biosynthesis; L-arginine biosynthesis; L-arginine from L-ornithine and carbamoyl phosphate: step 2/3. The protein is Argininosuccinate synthase of Pseudoalteromonas atlantica (strain T6c / ATCC BAA-1087).